The chain runs to 462 residues: Cytochrome c biogenesis protein CcsB (462 aa).

A run of 3 helical transmembrane segments spans residues 30–50 (LRVAIALLLLISVFSILGTVI), 89–109 (TWWYLVLLLAFGVSLIACTFR), and 175–195 (IGPIIVHIGMIVTLVGSIWGA).

Belongs to the Ccs1/CcsB family. As to quaternary structure, may interact with CcsA.

The protein resides in the cellular thylakoid membrane. Functionally, required during biogenesis of c-type cytochromes (cytochrome c6 and cytochrome f) at the step of heme attachment. This is Cytochrome c biogenesis protein CcsB from Picosynechococcus sp. (strain ATCC 27264 / PCC 7002 / PR-6) (Agmenellum quadruplicatum).